We begin with the raw amino-acid sequence, 690 residues long: Secreted LysM effector Vd5LysM (690 aa).

N-linked (GlcNAc...) asparagine glycosylation is found at N4 and N69. LysM domains follow at residues T203–I248, D253–I301, and R341–V387. N260, N295, N375, N410, N423, and N492 each carry an N-linked (GlcNAc...) asparagine glycan. The tract at residues P523–D546 is disordered. The LysM 4 domain occupies T549–V596. Low complexity predominate over residues S606 to G619. The tract at residues S606 to D636 is disordered. One can recognise a LysM 5 domain in the interval E639–I686.

The protein belongs to the secreted LysM effector family.

Its function is as follows. Might have a role in sequestration of chitin oligosaccharides (breakdown products of fungal cell walls that are released during invasion and act as triggers of host immunity) to dampen host defense. Does not play an important role during host colonization. This chain is Secreted LysM effector Vd5LysM, found in Verticillium dahliae (strain VdLs.17 / ATCC MYA-4575 / FGSC 10137) (Verticillium wilt).